A 105-amino-acid chain; its full sequence is UPF0235 protein RT0827 (105 aa).

The protein belongs to the UPF0235 family.

This is UPF0235 protein RT0827 from Rickettsia typhi (strain ATCC VR-144 / Wilmington).